Here is a 270-residue protein sequence, read N- to C-terminus: uncharacterized protein (270 aa).

The Cytoplasmic segment spans residues 1–37 (MATHTSKRRIHRWENNELSEENSTIIYFPARGLMWTH). Residues 38-58 (FPFVLGICLEFVGYVLKIVFI) form a helical membrane-spanning segment. Residues 59–65 (NSPSIST) are Extracellular-facing. The chain crosses the membrane as a helical span at residues 66–86 (FIAQSVLLLIAPSLYALSIFM). Residues 87-93 (LFSKMAR) are Cytoplasmic-facing. A helical membrane pass occupies residues 94 to 114 (LILMEAYMLIPAKFSTVSFVV). Residues 115–140 (ADMIGRVLQAVGGGLLSSWNSRNTGR) are Extracellular-facing. The helical transmembrane segment at 141–161 (ILIIVGLFIQIFCYTFLTFSQ) threads the bilayer. Residues 162–181 (LFLHYKMKATPSKIVRDSNE) lie on the Cytoplasmic side of the membrane. A helical transmembrane segment spans residues 182-202 (WFQYNFILLAGILLVNGRTIV). The Extracellular segment spans residues 203–220 (RVVQFLMGLQSYIGQHEW). Residues 221–241 (CLYVFDTVLMFLLPLIFLATF) traverse the membrane as a helical segment. Residues 242 to 270 (RARNLFKLQDKSVNIQLNKLLDKESVSED) lie on the Cytoplasmic side of the membrane.

This sequence belongs to the lipid-translocating exporter (LTE) (TC 9.A.26.1) family.

It localises to the membrane. This is an uncharacterized protein from Saccharomyces cerevisiae (strain ATCC 204508 / S288c) (Baker's yeast).